The primary structure comprises 511 residues: DNA nucleotidylexotransferase (511 aa).

The disordered stretch occupies residues 1–26 (MDPLQTAHAGPRKKRPRQTGASMAST). Residues 11 to 17 (PRKKRPR) carry the Nuclear localization signal motif. In terms of domain architecture, BRCT spans 27 to 124 (PQDVRFQDLV…KPVETTGKHQ (98 aa)). At serine 134 the chain carries Phosphoserine. The segment at 151 to 511 (SQYACQRRTT…DYIEPSERNA (361 aa)) is mediates interaction with DNTTIP2. The interval 258–262 (VGLKT) is involved in DNA binding. Residues 333-338 (GFRRGK) and 342-345 (HDVD) each bind a 2'-deoxyribonucleoside 5'-triphosphate. Aspartate 343, aspartate 345, and aspartate 435 together coordinate Mg(2+). 450-451 (GW) contacts a 2'-deoxyribonucleoside 5'-triphosphate.

It belongs to the DNA polymerase type-X family. In terms of assembly, interacts with PRP19 and DNTTIP1. Forms a ternary complex with DNTTIP2 and core histone. Released from this complex by PCNA. Interacts with TRERF1. Mg(2+) serves as cofactor.

Its subcellular location is the nucleus. It carries out the reaction DNA(n) + a 2'-deoxyribonucleoside 5'-triphosphate = DNA(n+1) + diphosphate. Functionally, template-independent DNA polymerase which catalyzes the random addition of deoxynucleoside 5'-triphosphate to the 3'-end of a DNA initiator. One of the in vivo functions of this enzyme is the addition of nucleotides at the junction (N region) of rearranged Ig heavy chain and T-cell receptor gene segments during the maturation of B- and T-cells. This chain is DNA nucleotidylexotransferase (DNTT), found in Eulemur macaco (Black lemur).